A 380-amino-acid polypeptide reads, in one-letter code: Erythronate-4-phosphate dehydrogenase (380 aa).

Substrate contacts are provided by S45 and T66. The NAD(+) site is built by D146 and T174. R207 is an active-site residue. D231 lines the NAD(+) pocket. E236 is a catalytic residue. Residue H253 is the Proton donor of the active site. G256 contacts NAD(+). Residue Y257 participates in substrate binding.

Belongs to the D-isomer specific 2-hydroxyacid dehydrogenase family. PdxB subfamily. As to quaternary structure, homodimer.

Its subcellular location is the cytoplasm. It carries out the reaction 4-phospho-D-erythronate + NAD(+) = (R)-3-hydroxy-2-oxo-4-phosphooxybutanoate + NADH + H(+). It functions in the pathway cofactor biosynthesis; pyridoxine 5'-phosphate biosynthesis; pyridoxine 5'-phosphate from D-erythrose 4-phosphate: step 2/5. Functionally, catalyzes the oxidation of erythronate-4-phosphate to 3-hydroxy-2-oxo-4-phosphonooxybutanoate. This Pseudomonas fluorescens (strain ATCC BAA-477 / NRRL B-23932 / Pf-5) protein is Erythronate-4-phosphate dehydrogenase.